Consider the following 460-residue polypeptide: Tyrosine phenol-lyase (460 aa).

The residue at position 260 (lysine 260) is an N6-(pyridoxal phosphate)lysine.

Belongs to the beta-eliminating lyase family. In terms of assembly, homotetramer. Requires pyridoxal 5'-phosphate as cofactor.

The enzyme catalyses L-tyrosine + H2O = phenol + pyruvate + NH4(+). The chain is Tyrosine phenol-lyase from Fusobacterium nucleatum subsp. nucleatum (strain ATCC 25586 / DSM 15643 / BCRC 10681 / CIP 101130 / JCM 8532 / KCTC 2640 / LMG 13131 / VPI 4355).